Reading from the N-terminus, the 147-residue chain is Transthyretin (147 aa).

Residues 1 to 20 (MASFRLLLLCLAGLVFVSEA) form the signal peptide. Cysteine 30 carries the sulfocysteine modification. Lysine 35 contributes to the L-thyroxine binding site. 4-carboxyglutamate is present on glutamate 62. Position 72 is a phosphoserine (serine 72). Glutamate 74 provides a ligand contact to L-thyroxine. The N-linked (GlcNAc...) asparagine glycan is linked to asparagine 118. L-thyroxine is bound at residue serine 137.

It belongs to the transthyretin family. In terms of assembly, homotetramer. Dimer of dimers. In the homotetramer, subunits assemble around a central channel that can accommodate two ligand molecules. Interacts with RBP4. Sulfonation of the reactive cysteine Cys-30 enhances the stability of the native conformation of TTR, avoiding misassembly of the protein leading to amyloid formation. Highly expressed in the choroid plexus.

It is found in the secreted. In terms of biological role, thyroid hormone-binding protein. Probably transports thyroxine from the bloodstream to the brain. The protein is Transthyretin (TTR) of Ovis aries (Sheep).